The primary structure comprises 1093 residues: GPI ethanolamine phosphate transferase 3, catalytic subunit (1093 aa).

The helical transmembrane segment at 4-24 (VSVLLFLAWVCFLFYAGIALF) threads the bilayer. The N-linked (GlcNAc...) asparagine glycan is linked to Asn268. Helical transmembrane passes span 460 to 480 (AAACLLCLLASQLAVAPGFLF), 483 to 503 (LLLIPVAWGLTWTILYAGVSV), 512 to 532 (VVLGAVAAAGSLLPFLWKAWV), 669 to 689 (LWYGACVGALVALLVVVRLWL), 702 to 722 (VLFVRWGMPLMVLGTAAYWAL), 748 to 768 (VMGLAALGLVLLLWRPVTVLV), 831 to 851 (SVYSAAMVTALLLLAFPLMLL), 856 to 876 (VSLVFLLLFLQSFLLLHLLAA), and 945 to 965 (FASHLLFAVGCPLLLLWPFLC). Residues 971–991 (KRRQPLPGSESEARVRPEEEE) are disordered. The next 2 membrane-spanning stretches (helical) occupy residues 1018 to 1038 (LKYLFILGAQILACALAASIL) and 1052 to 1072 (FIFEAVGFIVSSVGLLLGIAL).

The protein belongs to the PIGG/PIGN/PIGO family. PIGO subfamily. As to quaternary structure, forms the ethanolamine phosphate transferase 3 complex composed by PIGO and PIGF. PIGF is required to stabilize PIGO.

It is found in the endoplasmic reticulum membrane. It functions in the pathway glycolipid biosynthesis; glycosylphosphatidylinositol-anchor biosynthesis. Catalytic subunit of the ethanolamine phosphate transferase 3 complex that transfers an ethanolamine phosphate (EtNP) from a phosphatidylethanolamine (PE) to the 6-OH position of the third alpha-1,2-linked mannose of the an alpha-D-Man-(1-&gt;2)-alpha-D-Man-(1-&gt;6)-2-PEtn-alpha-D-Man-(1-&gt;4)-alpha-D-GlcN-(1-&gt;6)-(1-radyl,2-acyl-sn-glycero-3-phospho)-2-acyl-inositol (also termed H6) intermediate to generate a 6-PEtn-alpha-D-Man-(1-&gt;2)-alpha-D-Man-(1-&gt;6)-2-PEtn-alpha-D-Man-(1-&gt;4)-alpha-D-GlcN-(1-&gt;6)-(1-radyl,2-acyl-sn-glycero-3-phospho)-2-acyl-inositol (also termed H7) and participates in the tenth step of the glycosylphosphatidylinositol-anchor biosynthesis. The chain is GPI ethanolamine phosphate transferase 3, catalytic subunit from Mus musculus (Mouse).